The primary structure comprises 226 residues: Ribonuclease 3 (226 aa).

The RNase III domain maps to 7-134 (KQNLKKKYGI…FNGALFLDQG (128 aa)). Mg(2+) is bound at residue E47. Residue D51 is part of the active site. 2 residues coordinate Mg(2+): D120 and E123. E123 is a catalytic residue. Residues 160–226 (DYKTELQERL…AAQAALDKNK (67 aa)) form the DRBM domain. Residues 201-226 (KVSEGQGRNKKAAEQQAAQAALDKNK) are disordered. Positions 214–226 (EQQAAQAALDKNK) are enriched in low complexity.

This sequence belongs to the ribonuclease III family. Homodimer. Mg(2+) serves as cofactor.

Its subcellular location is the cytoplasm. It carries out the reaction Endonucleolytic cleavage to 5'-phosphomonoester.. In terms of biological role, digests double-stranded RNA. Involved in the processing of primary rRNA transcript to yield the immediate precursors to the large and small rRNAs (23S and 16S). Processes some mRNAs, and tRNAs when they are encoded in the rRNA operon. Processes pre-crRNA and tracrRNA of type II CRISPR loci if present in the organism. The chain is Ribonuclease 3 from Lactobacillus johnsonii (strain CNCM I-12250 / La1 / NCC 533).